A 343-amino-acid chain; its full sequence is Biotin synthase (343 aa).

Positions N64–R291 constitute a Radical SAM core domain. The [4Fe-4S] cluster site is built by C79, C83, and C86. C123, C154, C214, and R286 together coordinate [2Fe-2S] cluster.

This sequence belongs to the radical SAM superfamily. Biotin synthase family. In terms of assembly, homodimer. [4Fe-4S] cluster serves as cofactor. [2Fe-2S] cluster is required as a cofactor.

It carries out the reaction (4R,5S)-dethiobiotin + (sulfur carrier)-SH + 2 reduced [2Fe-2S]-[ferredoxin] + 2 S-adenosyl-L-methionine = (sulfur carrier)-H + biotin + 2 5'-deoxyadenosine + 2 L-methionine + 2 oxidized [2Fe-2S]-[ferredoxin]. Its pathway is cofactor biosynthesis; biotin biosynthesis; biotin from 7,8-diaminononanoate: step 2/2. Functionally, catalyzes the conversion of dethiobiotin (DTB) to biotin by the insertion of a sulfur atom into dethiobiotin via a radical-based mechanism. The protein is Biotin synthase of Cupriavidus necator (strain ATCC 17699 / DSM 428 / KCTC 22496 / NCIMB 10442 / H16 / Stanier 337) (Ralstonia eutropha).